A 76-amino-acid chain; its full sequence is Conotoxin Ca11b (76 aa).

The signal sequence occupies residues 1-19 (MKLVLAIVVILMLLSLSTG). Residues 20–42 (AEMSDNHASMSANALRDRLLGPK) constitute a propeptide that is removed on maturation. 4 cysteine pairs are disulfide-bonded: Cys-46-Cys-60, Cys-53-Cys-65, Cys-59-Cys-69, and Cys-64-Cys-76.

As to expression, expressed by the venom duct.

The protein resides in the secreted. In Conus caracteristicus (Characteristic cone), this protein is Conotoxin Ca11b.